Here is a 542-residue protein sequence, read N- to C-terminus: Beta-amylase 2, chloroplastic (542 aa).

The N-terminal 55 residues, methionine 1–arginine 55, are a transit peptide targeting the chloroplast. The substrate site is built by aspartate 136, histidine 176, and aspartate 184. The Proton donor role is filled by glutamate 269. Substrate contacts are provided by lysine 377, histidine 382, and threonine 424. Catalysis depends on glutamate 465, which acts as the Proton acceptor. Residues asparagine 466–alanine 467 and arginine 501 each bind substrate.

The protein belongs to the glycosyl hydrolase 14 family.

It is found in the plastid. Its subcellular location is the chloroplast. It carries out the reaction Hydrolysis of (1-&gt;4)-alpha-D-glucosidic linkages in polysaccharides so as to remove successive maltose units from the non-reducing ends of the chains.. Redox regulation; active in reducing conditions, inactive in oxidizing conditions. Its function is as follows. Low beta-amylase activity. Interacts poorly with starch or other alpha-1,4-glucan. The chain is Beta-amylase 2, chloroplastic (BAM2) from Arabidopsis thaliana (Mouse-ear cress).